A 415-amino-acid chain; its full sequence is Putative F-box/FBD/LRR-repeat protein At3g49040 (415 aa).

The F-box domain occupies 10–58 (EDRISELHEALLVHIMSSLPTKTVVATSVLSKRWRHVWKTVQNLKFVSK). LRR repeat units follow at residues 60-86 (HQTF…DLEF), 87-114 (SNQL…VLDL), 143-170 (TLTL…HLYK), 171-196 (VHFY…IVHR), and 213-241 (RLTI…NIRR). Residues 272–377 (ILESLTSAKR…TSLKKATFST (106 aa)) form the FBD domain.

In Arabidopsis thaliana (Mouse-ear cress), this protein is Putative F-box/FBD/LRR-repeat protein At3g49040.